The sequence spans 222 residues: Glutathione-specific gamma-glutamylcyclotransferase 1 (222 aa).

Residues Met1 to Gln22 are compositionally biased toward low complexity. A disordered region spans residues Met1–Pro24. Ile35–Ser40 contacts substrate. Glu115 functions as the Proton acceptor in the catalytic mechanism.

It belongs to the gamma-glutamylcyclotransferase family. ChaC subfamily. Interacts with NOTCH1 (via extracellular region).

It localises to the cytoplasm. The protein localises to the cytosol. The protein resides in the golgi apparatus. Its subcellular location is the trans-Golgi network. The enzyme catalyses glutathione = L-cysteinylglycine + 5-oxo-L-proline. Catalyzes the cleavage of glutathione into 5-oxo-L-proline and a Cys-Gly dipeptide. Acts specifically on glutathione, but not on other gamma-glutamyl peptides. Glutathione depletion is an important factor for apoptosis initiation and execution. Acts as a pro-apoptotic component of the unfolded protein response pathway by mediating the pro-apoptotic effects of the ATF4-ATF3-DDIT3/CHOP cascade. Negative regulator of Notch signaling pathway involved in embryonic neurogenesis: acts by inhibiting Notch cleavage by furin, maintaining Notch in an immature inactive form, thereby promoting neurogenesis in embryos. The polypeptide is Glutathione-specific gamma-glutamylcyclotransferase 1 (Homo sapiens (Human)).